Reading from the N-terminus, the 323-residue chain is Ankyrin repeat and SOCS box protein 11 (323 aa).

ANK repeat units follow at residues 64 to 93 (ADRS…NVNL), 97 to 126 (NRVS…HVNG), 130 to 159 (HGAT…KAQL), 162 to 191 (HLAS…NIDH), 195 to 224 (QLGT…SVDH), and 227 to 256 (WLDT…NLKR). Residues 273 to 323 (SVEQALLLREGPPALSQLCRLCVRKCLGRACHQAIHKLHLPEPLERFLLYQ) form the SOCS box domain.

The protein belongs to the ankyrin SOCS box (ASB) family. In terms of assembly, substrate-recognition component of the ECS(ASB11) complex, composed of ASB11, CUL5, ELOB, ELOC and RNF7/RBX2.

The protein resides in the endoplasmic reticulum. It participates in protein modification; protein ubiquitination. Functionally, substrate-recognition component of a cullin-5-RING E3 ubiquitin-protein ligase complex (ECS complex, also named CRL5 complex), which mediates the ubiquitination and subsequent proteasomal degradation of target proteins, such as BIK, DIRAS2 and RPN1. The ECS(ASB11) complex acts as a regulator of the endoplasmic reticulum unfolded protein response by mediating ubiquitination and degradation of BIK. The protein is Ankyrin repeat and SOCS box protein 11 of Homo sapiens (Human).